The following is a 1603-amino-acid chain: Transcription factor Gibbin (1603 aa).

Disordered regions lie at residues 19-108 (PDYL…SSSR), 150-236 (LRLS…STDY), 264-285 (LEPPSPEPEPQLLDPQPRFLDP), and 394-467 (CRRR…RKGK). A compositionally biased stretch (pro residues) spans 30–47 (GGPPTPRPLLPTRPPASP). N6-acetyllysine is present on K79. A compositionally biased stretch (polar residues) spans 166-178 (SFFSSPSLANSIR). Positions 179-194 (SPEERATPHAKSERPS) are enriched in basic and acidic residues. A compositionally biased stretch (low complexity) spans 216-225 (PGATAAATGL). Position 268 is a phosphoserine (S268). Over residues 273–285 (PQLLDPQPRFLDP) the composition is skewed to low complexity. The a.T hook 1 DNA-binding region spans 396-408 (RRKAGRGRKADAG). Over residues 428 to 446 (EPPPPPPPPPPALPGPGPV) the composition is skewed to pro residues. The segment at residues 544 to 556 (KRKRGRPPKNLLL) is a DNA-binding region (a.T hook 2). The disordered stretch occupies residues 581-607 (MPEVKKRRRRKQKLASPQPSYAADAND). The residue at position 596 (S596) is a Phosphoserine. K609 is covalently cross-linked (Glycyl lysine isopeptide (Lys-Gly) (interchain with G-Cter in SUMO2)). 2 disordered regions span residues 717–792 (LTEL…RNCG) and 806–827 (LESGASGRGSYYSTGAPSGQTE). Basic residues predominate over residues 737–746 (KPKRKRRSRK). Over residues 816 to 827 (YYSTGAPSGQTE) the composition is skewed to polar residues. S829 and S846 each carry phosphoserine. R891 bears the Omega-N-methylarginine mark. Phosphoserine occurs at positions 896 and 1064. 2 disordered regions span residues 1159 to 1198 (VSETFSESSSDSTQFNQPVGGGGFRRANSEASSSEGQSSL) and 1253 to 1286 (ASAAASGYPSKRSTGPRQPRGGRGGGACSAKKER). Low complexity-rich tracts occupy residues 1160 to 1171 (SETFSESSSDST) and 1187 to 1198 (SEASSSEGQSSL). Phosphoserine is present on S1187. Phosphoserine is present on residues S1322, S1324, and S1399. T1401 carries the post-translational modification Phosphothreonine. A Phosphoserine modification is found at S1403. Residue K1409 forms a Glycyl lysine isopeptide (Lys-Gly) (interchain with G-Cter in SUMO2) linkage. The disordered stretch occupies residues 1503 to 1533 (PHLASPPATPKADKEPLEMARPPGPPRGPAA). S1507 and S1549 each carry phosphoserine.

The protein resides in the nucleus. It is found in the chromosome. Transcription factor required for the proper patterning of the epidermis, which plays a key role in early epithelial morphogenesis. Directly binds promoter and enhancer regions and acts by maintaining local enhancer-promoter chromatin architecture. Interacts with many sequence-specific zinc-finger transcription factors and methyl-CpG-binding proteins to regulate the expression of mesoderm genes that wire surface ectoderm stratification. In Homo sapiens (Human), this protein is Transcription factor Gibbin.